The following is a 283-amino-acid chain: MLADMKVRRYIRLLFSYLLLAFMAVIIVYPLLWTAGASFNPGNSLISTSIIPKHPTFDHYKELFAGKESLQYVQWYVNSMKISLFTMAGSLLCVTFTAYAFSRFRFKGRKYALTLFLLLQMIPQFSALIALFVLAQILGMINSHWLLILLYIGGLIPMNTYLMKGYMDSIPMDLDESAKIDGASSTRIFFQIILPLSKPMAAVVAMNGFTGPLGDFVLSSTILRTPESYTLPVGLFNLVNDVMGASYTTFAAGALLISIPVAVIFIMLQKNFVSGLTAGGTKG.

Helical transmembrane passes span 13-33, 82-102, 115-135, 137-157, 188-208, and 248-268; these read LLFSYLLLAFMAVIIVYPLLW, ISLFTMAGSLLCVTFTAYAFS, LFLLLQMIPQFSALIALFVLA, ILGMINSHWLLILLYIGGLIP, IFFQIILPLSKPMAAVVAMNG, and TTFAAGALLISIPVAVIFIML. Residues 76 to 268 enclose the ABC transmembrane type-1 domain; the sequence is YVNSMKISLF…IPVAVIFIML (193 aa).

The protein belongs to the binding-protein-dependent transport system permease family. As to quaternary structure, the complex is composed of two ATP-binding proteins (MsmX), two transmembrane proteins (GanP and GanQ) and a solute-binding protein (GanS).

It localises to the cell membrane. Involved in galactan degradation. Part of the ABC transporter complex GanPQS involved in the uptake of galactooligosaccharides. Responsible for the translocation of the substrate across the membrane. The protein is Galactooligosaccharides transport system permease protein GanQ (ganQ) of Bacillus subtilis (strain 168).